Consider the following 103-residue polypeptide: Protein S100-A16 (103 aa).

One can recognise an EF-hand 1; degenerate domain in the interval valine 12 to asparagine 47. Positions glycine 54 to proline 89 constitute an EF-hand 2 domain. Ca(2+)-binding residues include aspartate 67, asparagine 69, aspartate 71, arginine 73, and glutamate 78.

The protein belongs to the S-100 family. Homodimer. Interacts with TP53. As to expression, ubiquitous. Highly expressed in esophagus, adipose tissues and colon. Expressed at lower level in lung, brain, pancreas and skeletal muscle. Expression is up-regulated in tumors of bladder, lung, thyroid gland, pancreas and ovary. Expressed in astrocytes.

Its subcellular location is the nucleus. It localises to the nucleolus. The protein resides in the cytoplasm. Calcium-binding protein. Binds one calcium ion per monomer. Can promote differentiation of adipocytes (in vitro). Overexpression in preadipocytes increases their proliferation, enhances adipogenesis and reduces insulin-stimulated glucose uptake. The chain is Protein S100-A16 from Homo sapiens (Human).